Reading from the N-terminus, the 504-residue chain is Pre-mRNA-processing factor 19 (504 aa).

An N-acetylserine modification is found at Ser2. The U-box domain maps to 2 to 73; that stretch reads SLICSISNEV…KPPSATSIPA (72 aa). A may mediate interaction with PSMC5 region spans residues 68 to 223; that stretch reads ATSIPAILKA…VGLHSASIPG (156 aa). 4 positions are modified to N6-acetyllysine: Lys122, Lys179, Lys244, and Lys261. The stretch at 219–259 is one WD 1 repeat; the sequence is ASIPGILALDLCPSDTNKILTGGADKNVVVFDKSTEQILAT. WD repeat units follow at residues 262–301, 304–345, 348–387, 390–429, 433–472, and 473–503; these read GHTK…CVQV, AHES…TKVT, TSGC…NVAN, GHSG…NFKT, DNNF…LHFT, and EHSG…KFYS.

This sequence belongs to the WD repeat PRP19 family. Homotetramer. Component of activated, catalytic and post-catalytic spliceosomes. Component of the Prp19 complex/PRP19C/Nineteen complex/NTC and related complexes described as PRP19-CDC5L splicing complex and PSO4 complex. A homotetramer of PRPF19, CDC5L, PLRG1 and BCAS2 constitute the core of those complexes. The interaction with CDC5L, PLRG1 and BCAS2 is direct within this core complex. At least three less stably associated proteins CTNNBL1, CWC15 and HSPA8 are found in the Prp19 complex. The Prp19 complex associates with the spliceosome during its assembly and remodeling recruiting additional proteins. Component of the XAB2 complex, a multimeric protein complex composed of XAB2, PRPF19, AQR, ZNF830, ISY1, and PPIE. Interacts with CWC22 and EIF4A3 in an RNA-independent manner. Interacts with RPA1 and RPA2; the PRP19-CDC5L complex is recruited to the sites of DNA repair where it interacts with the replication protein A complex (RPA). Interacts with SETMAR; required for SETMAR recruitment to site of DNA damage. Interacts with U2AF2; the interaction is direct and recruits the Prp19 complex to RNA polymerase II C-terminal domain (CTD) and the pre-mRNA. Interacts with PRPF3. Interacts with APEX1, DNTT and PSMB4. Interacts with KNSTRN. Interacts with PSMC5. Isoform 2 (via N-terminus) interacts with PPIA. Isoform 2 does not interact with CDC5L. Interacts with KHDC4. Interacts with USB1. Interacts with DDX41. Expressed in white and brown adipose tissues, brain and to a lower extent in liver, kidney, muscle, lung and spleen (at protein level).

It is found in the nucleus. It localises to the nucleoplasm. The protein localises to the cytoplasm. The protein resides in the cytoskeleton. Its subcellular location is the spindle. It is found in the lipid droplet. It catalyses the reaction S-ubiquitinyl-[E2 ubiquitin-conjugating enzyme]-L-cysteine + [acceptor protein]-L-lysine = [E2 ubiquitin-conjugating enzyme]-L-cysteine + N(6)-ubiquitinyl-[acceptor protein]-L-lysine.. It participates in protein modification; protein ubiquitination. Its function is as follows. Ubiquitin-protein ligase which is a core component of several complexes mainly involved in pre-mRNA splicing and DNA repair. Required for pre-mRNA splicing as component of the spliceosome. Core component of the PRP19C/Prp19 complex/NTC/Nineteen complex which is part of the spliceosome and participates in its assembly, its remodeling and is required for its activity. During assembly of the spliceosome, mediates 'Lys-63'-linked polyubiquitination of the U4 spliceosomal protein PRPF3. Ubiquitination of PRPF3 allows its recognition by the U5 component PRPF8 and stabilizes the U4/U5/U6 tri-snRNP spliceosomal complex. Recruited to RNA polymerase II C-terminal domain (CTD) and the pre-mRNA, it may also couple the transcriptional and spliceosomal machineries. The XAB2 complex, which contains PRPF19, is also involved in pre-mRNA splicing, transcription and transcription-coupled repair. Beside its role in pre-mRNA splicing PRPF19, as part of the PRP19-CDC5L complex, plays a role in the DNA damage response/DDR. It is recruited to the sites of DNA damage by the RPA complex where PRPF19 directly ubiquitinates RPA1 and RPA2. 'Lys-63'-linked polyubiquitination of the RPA complex allows the recruitment of the ATR-ATRIP complex and the activation of ATR, a master regulator of the DNA damage response. May also play a role in DNA double-strand break (DSB) repair by recruiting the repair factor SETMAR to altered DNA. As part of the PSO4 complex may also be involved in the DNA interstrand cross-links/ICLs repair process. In addition, may also mediate 'Lys-48'-linked polyubiquitination of substrates and play a role in proteasomal degradation. May play a role in the biogenesis of lipid droplets. May play a role in neural differentiation possibly through its function as part of the spliceosome. Forced expression leads to suppression of neuronal differentiation, and on the contrary to stimulation of astroglial cell differentiation in retinoic acid-primed P19 cells. In Mus musculus (Mouse), this protein is Pre-mRNA-processing factor 19.